Reading from the N-terminus, the 677-residue chain is UvrABC system protein B (677 aa).

One can recognise a Helicase ATP-binding domain in the interval Glu-24–Arg-412. Gly-37–Thr-44 lines the ATP pocket. Positions Tyr-90–Ile-113 match the Beta-hairpin motif. The 163-residue stretch at Gln-429–Arg-591 folds into the Helicase C-terminal domain. The UVR domain maps to Glu-635–Leu-670.

This sequence belongs to the UvrB family. Forms a heterotetramer with UvrA during the search for lesions. Interacts with UvrC in an incision complex.

The protein resides in the cytoplasm. In terms of biological role, the UvrABC repair system catalyzes the recognition and processing of DNA lesions. A damage recognition complex composed of 2 UvrA and 2 UvrB subunits scans DNA for abnormalities. Upon binding of the UvrA(2)B(2) complex to a putative damaged site, the DNA wraps around one UvrB monomer. DNA wrap is dependent on ATP binding by UvrB and probably causes local melting of the DNA helix, facilitating insertion of UvrB beta-hairpin between the DNA strands. Then UvrB probes one DNA strand for the presence of a lesion. If a lesion is found the UvrA subunits dissociate and the UvrB-DNA preincision complex is formed. This complex is subsequently bound by UvrC and the second UvrB is released. If no lesion is found, the DNA wraps around the other UvrB subunit that will check the other stand for damage. This chain is UvrABC system protein B, found in Bacteroides fragilis (strain ATCC 25285 / DSM 2151 / CCUG 4856 / JCM 11019 / LMG 10263 / NCTC 9343 / Onslow / VPI 2553 / EN-2).